The sequence spans 880 residues: Potassium transport protein 2 (880 aa).

Asn-9 carries an N-linked (GlcNAc...) asparagine glycan. Helical transmembrane passes span 28-48 (FVQDSFIIGMTILCSVILYGS) and 84-104 (TILLFGVLSTPITVNLGLTLF). The segment at 157 to 182 (MHRPVAPETKAEEAEHQENEKHHRHH) is disordered. Residues 165-177 (TKAEEAEHQENEK) are compositionally biased toward basic and acidic residues. N-linked (GlcNAc...) asparagine glycosylation is found at Asn-239, Asn-283, Asn-293, Asn-294, Asn-321, Asn-443, and Asn-460. The span at 289 to 315 (HHLDNNSSISSHNPSLETANDGNQETV) shows a compositional bias: polar residues. The disordered stretch occupies residues 289-344 (HHLDNNSSISSHNPSLETANDGNQETVSSSNSNYSTTRVDNDPHVASYSPQNSNFD). A compositionally biased stretch (low complexity) spans 316–325 (SSSNSNYSTT). 6 consecutive transmembrane segments (helical) span residues 494-514 (ILVVYFLFWHILGLVAFLIFI), 571-591 (LIFLGNTFFPIMLRFIIWIMI), 625-645 (WVLFLNLTLLNFASFFFFMVL), 684-704 (IAPAVMVTYMFMMYISAYPIA), 756-776 (QLSHDLWYLFLGYFIITIVEG), and 787-807 (FTLFAILFEVISGYGTVGLSL). Residues 857–880 (REEEDYMRRHGKKNTNRADPVPSS) form a disordered region.

It belongs to the TrkH potassium transport family.

It localises to the cell membrane. Together with TRK1, defines the major, high-affinity potassium influx transport system. Involved in maintenance of the proper sodium/potassium ratio in the cell and in regulating the plasma membrane potential. The chain is Potassium transport protein 2 (trk2) from Schizosaccharomyces pombe (strain 972 / ATCC 24843) (Fission yeast).